The following is a 387-amino-acid chain: Xylose isomerase (387 aa).

Catalysis depends on residues histidine 53 and aspartate 56. Mg(2+)-binding residues include glutamate 180, glutamate 216, histidine 219, aspartate 244, aspartate 254, aspartate 256, and aspartate 286.

This sequence belongs to the xylose isomerase family. As to quaternary structure, homotetramer. Mg(2+) serves as cofactor.

Its subcellular location is the cytoplasm. It carries out the reaction alpha-D-xylose = alpha-D-xylulofuranose. In Thermus thermophilus (strain ATCC 27634 / DSM 579 / HB8), this protein is Xylose isomerase (xylA).